The primary structure comprises 364 residues: Chorismate synthase (364 aa).

Residues arginine 48 and arginine 54 each contribute to the NADP(+) site. FMN is bound by residues 125–127 (RSS), 238–239 (NA), glycine 278, 293–297 (KPTSS), and arginine 319.

It belongs to the chorismate synthase family. As to quaternary structure, homotetramer. The cofactor is FMNH2.

The enzyme catalyses 5-O-(1-carboxyvinyl)-3-phosphoshikimate = chorismate + phosphate. It participates in metabolic intermediate biosynthesis; chorismate biosynthesis; chorismate from D-erythrose 4-phosphate and phosphoenolpyruvate: step 7/7. Functionally, catalyzes the anti-1,4-elimination of the C-3 phosphate and the C-6 proR hydrogen from 5-enolpyruvylshikimate-3-phosphate (EPSP) to yield chorismate, which is the branch point compound that serves as the starting substrate for the three terminal pathways of aromatic amino acid biosynthesis. This reaction introduces a second double bond into the aromatic ring system. The chain is Chorismate synthase from Shewanella sediminis (strain HAW-EB3).